The sequence spans 365 residues: Chorismate synthase (365 aa).

NADP(+)-binding residues include arginine 48 and arginine 54. FMN is bound by residues 131 to 133 (RSS), 243 to 244 (NA), glycine 288, 303 to 307 (KPTSS), and arginine 329.

This sequence belongs to the chorismate synthase family. Homotetramer. Requires FMNH2 as cofactor.

It catalyses the reaction 5-O-(1-carboxyvinyl)-3-phosphoshikimate = chorismate + phosphate. It functions in the pathway metabolic intermediate biosynthesis; chorismate biosynthesis; chorismate from D-erythrose 4-phosphate and phosphoenolpyruvate: step 7/7. Catalyzes the anti-1,4-elimination of the C-3 phosphate and the C-6 proR hydrogen from 5-enolpyruvylshikimate-3-phosphate (EPSP) to yield chorismate, which is the branch point compound that serves as the starting substrate for the three terminal pathways of aromatic amino acid biosynthesis. This reaction introduces a second double bond into the aromatic ring system. This Sinorhizobium fredii (strain NBRC 101917 / NGR234) protein is Chorismate synthase.